Here is an 808-residue protein sequence, read N- to C-terminus: Zinc finger protein 841 (808 aa).

Lys137 participates in a covalent cross-link: Glycyl lysine isopeptide (Lys-Gly) (interchain with G-Cter in SUMO2). A C2H2-type 1; degenerate zinc finger spans residues 145-167; the sequence is YIGNECGKAFRVSSSLINHQMIH. The segment at 173 to 195 adopts a C2H2-type 2; degenerate zinc-finger fold; it reads YRCNESGKAFHRGSLLTVHQIVH. 13 consecutive C2H2-type zinc fingers follow at residues 201–223, 229–251, 257–279, 285–307, 313–335, 341–363, 369–391, 397–419, 425–447, 453–475, 481–503, 509–531, and 537–559; these read YQCDVCGRIFRQNSDLVNHRRSH, YICNECGKSFSKSSHLAVHQRIH, YKCNRCGKCFSQSSSLATHQTVH, YKCNECGKTFKRNSSLTAHHIIH, YTCDVCGKVFYQNSQLVRHQIIH, YKCNECGKVFFQRSRLAGHRRIH, YKCNECGKVFSQHSHLAVHQRVH, YKCNECGKAFNWGSLLTVHQRIH, YKCNVCGKVFNYGGYLSVHMRCH, LHCNKCGMVFTYYSCLARHQRMH, YKCNVCGKVFIDSGNLSIHRRSH, FQCNECGKVFSYYSCLARHRKIH, and YKCNDCGKAYTQRSSLTKHLVIH. Residues Lys554 and Lys579 each participate in a glycyl lysine isopeptide (Lys-Gly) (interchain with G-Cter in SUMO2) cross-link. Residues 565 to 587 form a C2H2-type 16; degenerate zinc finger; sequence YHCNEFGEAFIQSSKLARYHRNP. 7 consecutive C2H2-type zinc fingers follow at residues 593–615, 621–643, 649–671, 677–699, 705–727, 733–755, and 761–783; these read HKCSECGRTFSHKTSLVYHQRRH, YKCIECGKVFNSTTTLARHRRIH, YKCNECGKVFRYRSGLARHWSIH, YKCNECGKAFRVRSILLNHQMMH, YKCNECGKAFIERSNLVYHQRNH, YKCMECGKAFGRRSCLTKHQRIH, and YKCNECGKSYISRSGLTKHQIKH. Lys791 participates in a covalent cross-link: Glycyl lysine isopeptide (Lys-Gly) (interchain with G-Cter in SUMO2).

This sequence belongs to the krueppel C2H2-type zinc-finger protein family.

Its subcellular location is the nucleus. May be involved in transcriptional regulation. This is Zinc finger protein 841 (ZNF841) from Homo sapiens (Human).